We begin with the raw amino-acid sequence, 59 residues long: UPF0391 membrane protein lpp2589 (59 aa).

2 consecutive transmembrane segments (helical) span residues Ala5–Val25 and Ile30–Leu50.

The protein belongs to the UPF0391 family.

It is found in the cell membrane. The chain is UPF0391 membrane protein lpp2589 from Legionella pneumophila (strain Paris).